The following is a 662-amino-acid chain: Junctophilin-1 (662 aa).

The Cytoplasmic portion of the chain corresponds to 1-640 (MTGGRFDFDD…EREANSGPNS (640 aa)). MORN repeat units lie at residues 14–36 (YCGG…KGQG), 38–59 (YSGS…SGNT), 60–82 (YQGY…KWMY), 106–128 (YEGT…DGGT), and 129–151 (YQGQ…PYGM). Residues Ser157, Ser216, and Ser220 each carry the phosphoserine modification. The interval 228 to 247 (SKSSISSKRSSVRSDAAMSR) is disordered. MORN repeat units lie at residues 281–303 (YMGE…NGMK) and 304–326 (YEGE…DGSK). The span at 432-443 (VDAKENPEEKVP) shows a compositional bias: basic and acidic residues. Residues 432-634 (VDAKENPEEK…DSCPSMEREA (203 aa)) are disordered. Thr448 is modified (phosphothreonine). Ser452 carries the post-translational modification Phosphoserine. The residue at position 461 (Thr461) is a Phosphothreonine. Phosphoserine occurs at positions 465, 469, and 475. A compositionally biased stretch (low complexity) spans 584 to 599 (KPSPNKWSPPKSVTKP). Over residues 600-614 (VAKESKAEPKAKKSE) the composition is skewed to basic and acidic residues. A helical; Anchor for type IV membrane protein transmembrane segment spans residues 641-661 (VMIVLVMLLNIGLAILFVHFL).

This sequence belongs to the junctophilin family.

It localises to the cell membrane. The protein resides in the endoplasmic reticulum membrane. The protein localises to the sarcoplasmic reticulum membrane. Its function is as follows. Junctophilins contribute to the formation of junctional membrane complexes (JMCs) which link the plasma membrane with the endoplasmic or sarcoplasmic reticulum in excitable cells. Provides a structural foundation for functional cross-talk between the cell surface and intracellular calcium release channels. JPH1 contributes to the construction of the skeletal muscle triad by linking the t-tubule (transverse-tubule) and SR (sarcoplasmic reticulum) membranes. The polypeptide is Junctophilin-1 (JPH1) (Oryctolagus cuniculus (Rabbit)).